Reading from the N-terminus, the 352-residue chain is tRNA N6-adenosine threonylcarbamoyltransferase (352 aa).

His111 and His115 together coordinate Fe cation. Substrate contacts are provided by residues 133-137 (LASGG), Asp166, Gly179, and Asn275. Asp300 provides a ligand contact to Fe cation.

The protein belongs to the KAE1 / TsaD family. The cofactor is Fe(2+).

The protein resides in the cytoplasm. The enzyme catalyses L-threonylcarbamoyladenylate + adenosine(37) in tRNA = N(6)-L-threonylcarbamoyladenosine(37) in tRNA + AMP + H(+). Required for the formation of a threonylcarbamoyl group on adenosine at position 37 (t(6)A37) in tRNAs that read codons beginning with adenine. Is involved in the transfer of the threonylcarbamoyl moiety of threonylcarbamoyl-AMP (TC-AMP) to the N6 group of A37, together with TsaE and TsaB. TsaD likely plays a direct catalytic role in this reaction. This Treponema pallidum (strain Nichols) protein is tRNA N6-adenosine threonylcarbamoyltransferase.